The following is a 399-amino-acid chain: STOREKEEPER protein (399 aa).

2 disordered regions span residues Met-1 to Trp-160 and Gly-250 to Gln-301. Positions Glu-20 to Glu-54 are enriched in acidic residues. Over residues Lys-69–Phe-79 the composition is skewed to polar residues. Low complexity-rich tracts occupy residues Ser-80–Ser-100 and Ala-116–Pro-125. 2 stretches are compositionally biased toward basic and acidic residues: residues Lys-143 to Ser-152 and Lys-270 to Glu-299.

It belongs to the GeBP family. In terms of tissue distribution, expressed in tubers and in leaves treated with sucrose.

The protein localises to the nucleus. May act as a transcriptional regulator. Binds specifically to the B-box motif, a promoter element that is required for the tuber-specific and sucrose inducible expression of the patatin gene. In Solanum tuberosum (Potato), this protein is STOREKEEPER protein.